Here is a 107-residue protein sequence, read N- to C-terminus: ATP-dependent Clp protease adapter protein ClpS (107 aa).

The protein belongs to the ClpS family. Binds to the N-terminal domain of the chaperone ClpA.

Involved in the modulation of the specificity of the ClpAP-mediated ATP-dependent protein degradation. This is ATP-dependent Clp protease adapter protein ClpS from Syntrophus aciditrophicus (strain SB).